Here is a 224-residue protein sequence, read N- to C-terminus: UPF0758 protein PFLU_5982 (224 aa).

The MPN domain occupies 102–224 (VLESPKAVRD…PLSMAEYGWL (123 aa)). Positions 173, 175, and 186 each coordinate Zn(2+). A JAMM motif motif is present at residues 173-186 (HNHPSGSLEPSAAD).

This sequence belongs to the UPF0758 family.

This chain is UPF0758 protein PFLU_5982, found in Pseudomonas fluorescens (strain SBW25).